The primary structure comprises 431 residues: Adenylosuccinate synthetase (431 aa).

GTP is bound by residues 13–19 and 41–43; these read GDEGKGK and GHT. Residue Asp-14 is the Proton acceptor of the active site. Mg(2+)-binding residues include Asp-14 and Gly-41. IMP-binding positions include 14–17, 39–42, Thr-130, Arg-144, Gln-225, Thr-240, and Arg-304; these read DEGK and NAGH. The active-site Proton donor is His-42. 300–306 provides a ligand contact to substrate; it reads ATTGRKR. Residues Arg-306, 332–334, and 415–417 contribute to the GTP site; these read KLD and STG.

This sequence belongs to the adenylosuccinate synthetase family. Homodimer. The cofactor is Mg(2+).

Its subcellular location is the cytoplasm. The catalysed reaction is IMP + L-aspartate + GTP = N(6)-(1,2-dicarboxyethyl)-AMP + GDP + phosphate + 2 H(+). It participates in purine metabolism; AMP biosynthesis via de novo pathway; AMP from IMP: step 1/2. Plays an important role in the de novo pathway of purine nucleotide biosynthesis. Catalyzes the first committed step in the biosynthesis of AMP from IMP. The sequence is that of Adenylosuccinate synthetase from Shewanella halifaxensis (strain HAW-EB4).